Reading from the N-terminus, the 681-residue chain is Methionine--tRNA ligase (681 aa).

Positions 12–22 (PYANGSIHLGH) match the 'HIGH' region motif. Zn(2+) contacts are provided by Cys143, Cys146, Cys156, and Cys159. Positions 327 to 331 (KMSKS) match the 'KMSKS' region motif. Lys330 lines the ATP pocket. Residues 545 to 557 (FEKSNPEKAKQDP) are compositionally biased toward basic and acidic residues. Residues 545–566 (FEKSNPEKAKQDPSKSNTNEVK) form a disordered region. Positions 580–681 (ELSKVELRVG…RDASPGDLLK (102 aa)) constitute a tRNA-binding domain.

The protein belongs to the class-I aminoacyl-tRNA synthetase family. MetG type 1 subfamily. In terms of assembly, homodimer. The cofactor is Zn(2+).

The protein resides in the cytoplasm. The catalysed reaction is tRNA(Met) + L-methionine + ATP = L-methionyl-tRNA(Met) + AMP + diphosphate. Its function is as follows. Is required not only for elongation of protein synthesis but also for the initiation of all mRNA translation through initiator tRNA(fMet) aminoacylation. The protein is Methionine--tRNA ligase of Leptospira biflexa serovar Patoc (strain Patoc 1 / ATCC 23582 / Paris).